The following is a 156-amino-acid chain: ATP synthase subunit b (156 aa).

A helical transmembrane segment spans residues 7–27; that stretch reads LFAQMVVFLILAWFTMKFVWP.

It belongs to the ATPase B chain family. F-type ATPases have 2 components, F(1) - the catalytic core - and F(0) - the membrane proton channel. F(1) has five subunits: alpha(3), beta(3), gamma(1), delta(1), epsilon(1). F(0) has three main subunits: a(1), b(2) and c(10-14). The alpha and beta chains form an alternating ring which encloses part of the gamma chain. F(1) is attached to F(0) by a central stalk formed by the gamma and epsilon chains, while a peripheral stalk is formed by the delta and b chains.

It is found in the cell inner membrane. Its function is as follows. F(1)F(0) ATP synthase produces ATP from ADP in the presence of a proton or sodium gradient. F-type ATPases consist of two structural domains, F(1) containing the extramembraneous catalytic core and F(0) containing the membrane proton channel, linked together by a central stalk and a peripheral stalk. During catalysis, ATP synthesis in the catalytic domain of F(1) is coupled via a rotary mechanism of the central stalk subunits to proton translocation. Component of the F(0) channel, it forms part of the peripheral stalk, linking F(1) to F(0). The chain is ATP synthase subunit b from Paraburkholderia phytofirmans (strain DSM 17436 / LMG 22146 / PsJN) (Burkholderia phytofirmans).